Reading from the N-terminus, the 101-residue chain is Small ribosomal subunit protein uS14 (101 aa).

The protein belongs to the universal ribosomal protein uS14 family. In terms of assembly, part of the 30S ribosomal subunit. Contacts proteins S3 and S10.

In terms of biological role, binds 16S rRNA, required for the assembly of 30S particles and may also be responsible for determining the conformation of the 16S rRNA at the A site. This chain is Small ribosomal subunit protein uS14, found in Buchnera aphidicola subsp. Baizongia pistaciae (strain Bp).